The chain runs to 105 residues: Urease subunit beta (105 aa).

The protein belongs to the urease beta subunit family. As to quaternary structure, heterotrimer of UreA (gamma), UreB (beta) and UreC (alpha) subunits. Three heterotrimers associate to form the active enzyme.

Its subcellular location is the cytoplasm. The enzyme catalyses urea + 2 H2O + H(+) = hydrogencarbonate + 2 NH4(+). It functions in the pathway nitrogen metabolism; urea degradation; CO(2) and NH(3) from urea (urease route): step 1/1. The protein is Urease subunit beta of Mycobacterium sp. (strain JLS).